Here is a 200-residue protein sequence, read N- to C-terminus: Ribonuclease HII (200 aa).

One can recognise an RNase H type-2 domain in the interval 6 to 200 (ESIAGVDEVG…KLFAVHGSLT (195 aa)). 3 residues coordinate a divalent metal cation: Asp12, Glu13, and Asp108.

Belongs to the RNase HII family. It depends on Mn(2+) as a cofactor. Mg(2+) is required as a cofactor.

It is found in the cytoplasm. The enzyme catalyses Endonucleolytic cleavage to 5'-phosphomonoester.. Endonuclease that specifically degrades the RNA of RNA-DNA hybrids. The protein is Ribonuclease HII of Prochlorococcus marinus (strain MIT 9303).